The primary structure comprises 497 residues: UDP-N-acetylmuramoyl-L-alanyl-D-glutamate--2,6-diaminopimelate ligase (497 aa).

Residues Leu-27 and Ser-29 each contribute to the UDP-N-acetyl-alpha-D-muramoyl-L-alanyl-D-glutamate site. 116-122 (GTNGKTT) lines the ATP pocket. UDP-N-acetyl-alpha-D-muramoyl-L-alanyl-D-glutamate is bound by residues Asn-157, 158–159 (TT), Ser-185, Gln-191, and Arg-193. Lys-225 carries the N6-carboxylysine modification. Residues Arg-392, 416-419 (DNPR), Gly-467, and Glu-471 contribute to the meso-2,6-diaminopimelate site. Residues 416-419 (DNPR) carry the Meso-diaminopimelate recognition motif motif.

This sequence belongs to the MurCDEF family. MurE subfamily. It depends on Mg(2+) as a cofactor. Post-translationally, carboxylation is probably crucial for Mg(2+) binding and, consequently, for the gamma-phosphate positioning of ATP.

It is found in the cytoplasm. The enzyme catalyses UDP-N-acetyl-alpha-D-muramoyl-L-alanyl-D-glutamate + meso-2,6-diaminopimelate + ATP = UDP-N-acetyl-alpha-D-muramoyl-L-alanyl-gamma-D-glutamyl-meso-2,6-diaminopimelate + ADP + phosphate + H(+). It participates in cell wall biogenesis; peptidoglycan biosynthesis. Its function is as follows. Catalyzes the addition of meso-diaminopimelic acid to the nucleotide precursor UDP-N-acetylmuramoyl-L-alanyl-D-glutamate (UMAG) in the biosynthesis of bacterial cell-wall peptidoglycan. This is UDP-N-acetylmuramoyl-L-alanyl-D-glutamate--2,6-diaminopimelate ligase from Buchnera aphidicola subsp. Schizaphis graminum (strain Sg).